A 161-amino-acid polypeptide reads, in one-letter code: Cytochrome c-type biogenesis protein CcmE (161 aa).

The Cytoplasmic segment spans residues 1–8 (MNARRKKR). Residues 9-29 (LALATALIGGVAAIASLLLYA) form a helical; Signal-anchor for type II membrane protein membrane-spanning segment. The Periplasmic portion of the chain corresponds to 30–161 (LNSNLNLFYT…EYDSTQKTGY (132 aa)). Residues His-131 and Tyr-135 each coordinate heme.

It belongs to the CcmE/CycJ family.

It is found in the cell inner membrane. In terms of biological role, heme chaperone required for the biogenesis of c-type cytochromes. Transiently binds heme delivered by CcmC and transfers the heme to apo-cytochromes in a process facilitated by CcmF and CcmH. The protein is Cytochrome c-type biogenesis protein CcmE of Shewanella loihica (strain ATCC BAA-1088 / PV-4).